The chain runs to 1309 residues: MLLNGDCPESLKKEAAAAEPPRENGLDEAGPGDETTGQEVIVIQDTGFSVKILAPGIEPFSLQVSPQEMVQEIHQVLMDREDTCHRTCFSLHLDGNVLDHFSELRSVEGLQEGSVLRVVEEPYTVREARIHVRHVRDLLKSLDPSDAFNGVDCNSLSFLSVFTDGDLGDSGKRKKGLEMDPIDCTPPEYILPGSRERPLCPLQPQNRDWKPLQCLKVLTMSGWNPPPGNRKMHGDLMYLFVITAEDRQVSITASTRGFYLNQSTAYHFNPKPASPRFLSHSLVELLNQISPTFKKNFAVLQKKRVQRHPFERIATPFQVYSWTAPQAEHAMDCVRAEDAYTSRLGYEEHIPGQTRDWNEELQTTRELPRKNLPERLLRERAIFKVHSDFTAAATRGAMAVIDGNVMAINPSEETKMQMFIWNNIFFSLGFDVRDHYKDFGGDVAAYVAPTNDLNGVRTYNAVDVEGLYTLGTVVVDYRGYRVTAQSIIPGILERDQEQSVIYGSIDFGKTVVSHPRYLELLERTSRPLKILRHQVLNDRDEEVELCSSVECKGIIGNDGRHYILDLLRTFPPDLNFLPVPGEELPEECARAGFPRAHRHKLCCLRQELVDAFVEHRYLLFMKLAALQLMQQNASQLETPSSLENGGPSSLESKSEDPPGQEAGSEEEGSSASGLAKVKELAETIAADDGTDPRSREVIRNACKAVGSISSTAFDIRFNPDIFSPGVRFPESCQDEVRDQKQLLKDAAAFLLSCQIPGLVKDCMEHAVLPVDGATLAEVMRQRGINMRYLGKVLELVLRSPARHQLDHVFKIGIGELITRSAKHIFKTYLQGVELSGLSAAISHFLNCFLSSYPNPVAHLPADELVSKKRNKRRKNRPPGAADNTAWAVMTPQELWKNICQEAKNYFDFDLECETVDQAVETYGLQKITLLREISLKTGIQVLLKEYSFDSRHKPAFTEEDVLNIFPVVKHVNPKASDAFHFFQSGQAKVQQGFLKEGCELINEALNLFNNVYGAMHVETCACLRLLARLHYIMGDYAEALSNQQKAVLMSERVMGTEHPNTIQEYMHLALYCFASSQLSTALSLLYRARYLMLLVFGEDHPEMALLDNNIGLVLHGVMEYDLSLRFLENALAVSTKYHGPKALKVALSHHLVARVYESKAEFRSALQHEKEGYTIYKTQLGEDHEKTKESSEYLKCLTQQAVALQRTMNEIYRNGSSANIPPLKFTAPSMASVLEQLNVINGILFIPLSQKDLENLKAEVARRHQLQEASRNRDRAEEPMATEPAPAGAPGDLGSQPPAAKDPSPSVQG.

Positions 1–34 are disordered; sequence MLLNGDCPESLKKEAAAAEPPRENGLDEAGPGDE. The segment covering 9–25 has biased composition (basic and acidic residues); it reads ESLKKEAAAAEPPRENG. Phosphoserine occurs at positions 279 and 281. A Clu domain is found at 335-577; the sequence is RAEDAYTSRL…RTFPPDLNFL (243 aa). Over residues 636-651 the composition is skewed to polar residues; that stretch reads LETPSSLENGGPSSLE. The segment at 636–674 is disordered; it reads LETPSSLENGGPSSLESKSEDPPGQEAGSEEEGSSASGL. A phosphoserine mark is found at serine 654, serine 664, and serine 723. TPR repeat units follow at residues 978 to 1011, 1020 to 1053, 1104 to 1137, and 1146 to 1179; these read AFHF…FNNV, CACL…SERV, ALLD…STKY, and ALSH…YKTQ. A compositionally biased stretch (basic and acidic residues) spans 1264–1278; the sequence is HQLQEASRNRDRAEE. The tract at residues 1264 to 1309 is disordered; it reads HQLQEASRNRDRAEEPMATEPAPAGAPGDLGSQPPAAKDPSPSVQG. The segment covering 1279–1290 has biased composition (low complexity); sequence PMATEPAPAGAP.

The protein belongs to the CLU family.

The protein resides in the cytoplasm. It is found in the cytoplasmic granule. MRNA-binding protein involved in proper cytoplasmic distribution of mitochondria. Specifically binds mRNAs of nuclear-encoded mitochondrial proteins in the cytoplasm and regulates transport or translation of these transcripts close to mitochondria, playing a role in mitochondrial biogenesis. This chain is Clustered mitochondria protein homolog (CLUH), found in Homo sapiens (Human).